The sequence spans 586 residues: MVRFIFVTGGVVSSLGKGITAASLAMLLQAKGFRVSVRKLDPYLNVDPGTMNPHEHGEVYVTDDGAETDLDLGHYERFTGVTACKCDNITTGAIYSKLLKDERLGNYTGITVQVIPHVTNIIKDFIMSNTNGFDFIICEIGGTVGDIEGLPFFEAIRQIGNKLKNANCLFIHLTLLPYVKTARELKTKPTQHSVKELRAIGISPNILVCRAERNISKSAIDKIALFCNIKPEYVIPAIDQKNIYLVPIAYHNSGLENKVLNFFNINVVPSKLDKWYDIIDKIKDSNSKVKIAIITKYHKTQDAYKSVIEALNHAGIYYKYKIDVLWINAENLTEENINKKLLDINGILVPGGFGVRATQGKMIAIKYARTNNIPFFGICFGMQLATIEIAQNLIGIQDAVTEEFKIKGTKIIEKINKNCEDATIKIKNAHISKCTYSEAFECDASTVYTNIHEDSNNLSTDKLQIETNFRNMSDIEKTMRLGAYPCNLVANTIAANAYKSLEINERHRHRYKFNNEFQNIFEQHGVVFSGFSQNKQIVEIIELPELRWFVGVQFHPEFKSKPFEAHPLFIQFIKATIEYNKSNEQQ.

Positions methionine 1–isoleucine 265 are amidoligase domain. Serine 13 serves as a coordination point for CTP. Position 13 (serine 13) interacts with UTP. ATP-binding positions include serine 14–isoleucine 19 and aspartate 71. The Mg(2+) site is built by aspartate 71 and glutamate 139. CTP-binding positions include aspartate 146 to glutamate 148, lysine 186 to glutamine 191, and lysine 222. UTP contacts are provided by residues lysine 186 to glutamine 191 and lysine 222. The Glutamine amidotransferase type-1 domain occupies lysine 290–serine 582. Residue glycine 352 participates in L-glutamine binding. Cysteine 379 serves as the catalytic Nucleophile; for glutamine hydrolysis. L-glutamine-binding positions include phenylalanine 380–glutamine 383 and glutamate 403. The region spanning alanine 429–serine 473 is the RPE1 insert domain. Arginine 510 serves as a coordination point for L-glutamine. Residues histidine 555 and glutamate 557 contribute to the active site.

Belongs to the CTP synthase family. Homotetramer.

The catalysed reaction is UTP + L-glutamine + ATP + H2O = CTP + L-glutamate + ADP + phosphate + 2 H(+). The enzyme catalyses L-glutamine + H2O = L-glutamate + NH4(+). It catalyses the reaction UTP + NH4(+) + ATP = CTP + ADP + phosphate + 2 H(+). Its pathway is pyrimidine metabolism; CTP biosynthesis via de novo pathway; CTP from UDP: step 2/2. Allosterically activated by GTP, when glutamine is the substrate; GTP has no effect on the reaction when ammonia is the substrate. The allosteric effector GTP functions by stabilizing the protein conformation that binds the tetrahedral intermediate(s) formed during glutamine hydrolysis. Inhibited by the product CTP, via allosteric rather than competitive inhibition. Functionally, catalyzes the ATP-dependent amination of UTP to CTP with either L-glutamine or ammonia as the source of nitrogen. Regulates intracellular CTP levels through interactions with the four ribonucleotide triphosphates. In Rickettsia prowazekii (strain Madrid E), this protein is CTP synthase.